We begin with the raw amino-acid sequence, 411 residues long: LIM domain-binding protein 1 (411 aa).

The residue at position 2 (Ser2) is an N-acetylserine. Position 61 is a phosphothreonine (Thr61). Ser265 and Ser302 each carry phosphoserine. Disordered regions lie at residues 283–330 and 367–411; these read APPA…TFAL and DAAN…QASQ. Residues 302 to 318 are compositionally biased toward low complexity; sequence SGGSTMSSGGGNTNNSN. Residues 336–375 enclose the LIM interaction domain (LID) domain; it reads DVMVVGEPTLMGGEFGDEDERLITRLENTQFDAANGIDDE.

It belongs to the LDB family. Interacts with ESR1. Forms homodimers and heterodimers. Interacts with and activates LHX1/LIM1. Interacts with the LIM domains of ISL1 and LMO2. Can assemble in a complex with LMO2 and TAL1/SCL but does not interact with TAL1/SCL directly. Strongly interacts with the LIM2 domain of LMX1A and more weakly with the LIM1 domain. Homodimerization is not required for, and does not effect, LMX1A-binding. Component of a nuclear TAL-1 complex composed at least of CBFA2T3, LDB1, TAL1 and TCF3. Interacts with LHX6 and LHX9. At neuronal promoters, forms a complex with LHX3 involved in the specification of interneurons, in motor neurons, it is displaced by ISL1 to form a ternary complex in which ISL1 contacts both LHX3 and LDB1. Interacts with SLK; leading to negatively regulate SLK kinase activity. Interacts with YWHAZ. Interacts with PRDM1/BLIMP1. Interacts with LMO4. Interacts with RLIM/RNF12; the interaction inhibits the ubiquitination of LMO proteins. In terms of processing, ubiquitinated by RLIM/RNF12, leading to its degradation by the proteasome. In terms of tissue distribution, expressed in a wide range of adult tissues including brain, heart, skeletal muscle, colon, thymus, spleen, kidney, liver, small intestine, lung and peripheral blood leukocytes.

It localises to the nucleus. Binds to the LIM domain of a wide variety of LIM domain-containing transcription factors. May regulate the transcriptional activity of LIM-containing proteins by determining specific partner interactions. Plays a role in the development of interneurons and motor neurons in cooperation with LHX3 and ISL1. Acts synergistically with LHX1/LIM1 in axis formation and activation of gene expression. Acts with LMO2 in the regulation of red blood cell development, maintaining erythroid precursors in an immature state. This Homo sapiens (Human) protein is LIM domain-binding protein 1 (LDB1).